A 273-amino-acid polypeptide reads, in one-letter code: 2,3,4,5-tetrahydropyridine-2,6-dicarboxylate N-succinyltransferase (273 aa).

Arg-104 and Asp-141 together coordinate substrate.

Belongs to the transferase hexapeptide repeat family. As to quaternary structure, homotrimer.

The protein localises to the cytoplasm. The catalysed reaction is (S)-2,3,4,5-tetrahydrodipicolinate + succinyl-CoA + H2O = (S)-2-succinylamino-6-oxoheptanedioate + CoA. The protein operates within amino-acid biosynthesis; L-lysine biosynthesis via DAP pathway; LL-2,6-diaminopimelate from (S)-tetrahydrodipicolinate (succinylase route): step 1/3. In Neisseria meningitidis serogroup B (strain ATCC BAA-335 / MC58), this protein is 2,3,4,5-tetrahydropyridine-2,6-dicarboxylate N-succinyltransferase.